Consider the following 352-residue polypeptide: Holliday junction branch migration complex subunit RuvB (352 aa).

Positions 13 to 201 are large ATPase domain (RuvB-L); sequence FSLRKKELRL…FGISQKIEFY (189 aa). Residues arginine 41, glycine 82, lysine 85, threonine 86, threonine 87, 148–150, arginine 191, tyrosine 201, and arginine 238 contribute to the ATP site; that span reads EDF. Threonine 86 contributes to the Mg(2+) binding site. The tract at residues 202–273 is small ATPAse domain (RuvB-S); sequence TCDELKQIID…LIKKALNSYQ (72 aa). The head domain (RuvB-H) stretch occupies residues 276–352; the sequence is EKGLDYVDRQ…KYIDSKNDNF (77 aa). DNA is bound by residues arginine 330 and arginine 335.

This sequence belongs to the RuvB family. Homohexamer. Forms an RuvA(8)-RuvB(12)-Holliday junction (HJ) complex. HJ DNA is sandwiched between 2 RuvA tetramers; dsDNA enters through RuvA and exits via RuvB. An RuvB hexamer assembles on each DNA strand where it exits the tetramer. Each RuvB hexamer is contacted by two RuvA subunits (via domain III) on 2 adjacent RuvB subunits; this complex drives branch migration. In the full resolvosome a probable DNA-RuvA(4)-RuvB(12)-RuvC(2) complex forms which resolves the HJ.

Its subcellular location is the cytoplasm. The enzyme catalyses ATP + H2O = ADP + phosphate + H(+). Its function is as follows. The RuvA-RuvB-RuvC complex processes Holliday junction (HJ) DNA during genetic recombination and DNA repair, while the RuvA-RuvB complex plays an important role in the rescue of blocked DNA replication forks via replication fork reversal (RFR). RuvA specifically binds to HJ cruciform DNA, conferring on it an open structure. The RuvB hexamer acts as an ATP-dependent pump, pulling dsDNA into and through the RuvAB complex. RuvB forms 2 homohexamers on either side of HJ DNA bound by 1 or 2 RuvA tetramers; 4 subunits per hexamer contact DNA at a time. Coordinated motions by a converter formed by DNA-disengaged RuvB subunits stimulates ATP hydrolysis and nucleotide exchange. Immobilization of the converter enables RuvB to convert the ATP-contained energy into a lever motion, pulling 2 nucleotides of DNA out of the RuvA tetramer per ATP hydrolyzed, thus driving DNA branch migration. The RuvB motors rotate together with the DNA substrate, which together with the progressing nucleotide cycle form the mechanistic basis for DNA recombination by continuous HJ branch migration. Branch migration allows RuvC to scan DNA until it finds its consensus sequence, where it cleaves and resolves cruciform DNA. The chain is Holliday junction branch migration complex subunit RuvB from Prochlorococcus marinus (strain MIT 9312).